The sequence spans 458 residues: UDP-N-acetylmuramate--L-alanine ligase (458 aa).

118–124 (GTHGKTT) contacts ATP.

It belongs to the MurCDEF family.

It is found in the cytoplasm. It carries out the reaction UDP-N-acetyl-alpha-D-muramate + L-alanine + ATP = UDP-N-acetyl-alpha-D-muramoyl-L-alanine + ADP + phosphate + H(+). Its pathway is cell wall biogenesis; peptidoglycan biosynthesis. Cell wall formation. In Clostridium botulinum (strain Langeland / NCTC 10281 / Type F), this protein is UDP-N-acetylmuramate--L-alanine ligase.